Here is a 457-residue protein sequence, read N- to C-terminus: Argininosuccinate lyase (457 aa).

This sequence belongs to the lyase 1 family. Argininosuccinate lyase subfamily.

It is found in the cytoplasm. It carries out the reaction 2-(N(omega)-L-arginino)succinate = fumarate + L-arginine. Its pathway is amino-acid biosynthesis; L-arginine biosynthesis; L-arginine from L-ornithine and carbamoyl phosphate: step 3/3. The sequence is that of Argininosuccinate lyase from Shigella sonnei (strain Ss046).